We begin with the raw amino-acid sequence, 327 residues long: Tagatose 1,6-diphosphate aldolase 2 (327 aa).

The protein belongs to the aldolase LacD family.

It catalyses the reaction D-tagatofuranose 1,6-bisphosphate = D-glyceraldehyde 3-phosphate + dihydroxyacetone phosphate. The protein operates within carbohydrate metabolism; D-tagatose 6-phosphate degradation; D-glyceraldehyde 3-phosphate and glycerone phosphate from D-tagatose 6-phosphate: step 2/2. The polypeptide is Tagatose 1,6-diphosphate aldolase 2 (Streptococcus pyogenes serotype M6 (strain ATCC BAA-946 / MGAS10394)).